A 403-amino-acid polypeptide reads, in one-letter code: Para-nitrophenol 4-monooxygenase (403 aa).

FAD-binding positions include 6-35 (GVVVVGGGPVGLLTALKLGKAGIKVVVLEA) and 279-289 (FRRGRVVLAGD).

This sequence belongs to the PheA/TfdB FAD monooxygenase family. In terms of assembly, monomer. It depends on FAD as a cofactor.

It catalyses the reaction 4-nitrophenol + NADPH + O2 + H(+) = 1,4-benzoquinone + nitrite + NADP(+) + H2O. It functions in the pathway xenobiotic degradation; 4-nitrophenol degradation. Its function is as follows. Involved in the degradation of para-nitrophenol (4-NP). Catalyzes oxidation of 4-nitrophenol (4-NP) at position 4 with concomitant removal of the nitro group as nitrite and production of para-benzoquinone. This chain is Para-nitrophenol 4-monooxygenase (pnpA), found in Pseudomonas sp. (strain WBC-3).